The chain runs to 441 residues: GTPase Der (441 aa).

EngA-type G domains follow at residues 2 to 164 and 173 to 343; these read QKVA…PADE and IRIS…EKWQ. GTP-binding positions include 8 to 15, 55 to 59, 116 to 119, 179 to 186, 226 to 230, and 288 to 291; these read GRPNVGKS, DTGGL, NKID, DTAGI, and NKWD. The KH-like domain maps to 344–428; that stretch reads SRIPTAELNR…PVRLKWKEKG (85 aa).

It belongs to the TRAFAC class TrmE-Era-EngA-EngB-Septin-like GTPase superfamily. EngA (Der) GTPase family. As to quaternary structure, associates with the 50S ribosomal subunit.

GTPase that plays an essential role in the late steps of ribosome biogenesis. This is GTPase Der from Deinococcus geothermalis (strain DSM 11300 / CIP 105573 / AG-3a).